Consider the following 107-residue polypeptide: uncharacterized protein (107 aa).

Helical transmembrane passes span 14–34 (YLAE…IVAW) and 68–88 (FFVF…LVPI).

Its subcellular location is the cell membrane. This is an uncharacterized protein from Haemophilus influenzae (strain ATCC 51907 / DSM 11121 / KW20 / Rd).